The sequence spans 139 residues: I-Kappa-B like protein N1 (139 aa).

ANK repeat units lie at residues 16–48 (NGENLLHAMCRHGNSLALSIIAQSINKNYQYLL), 54–87 (EGRKCIHIAAVMHKGQVATELIIILLNFGADVNG), and 92–122 (TGDTVLHIAVYLKDYYLAEWLCRRSGININA).

Belongs to the polydnaviridae I-Kappa-B-like protein family.

In terms of biological role, suppresses the host immune response through NF-kappa-B inactivation. Possesses ankyrin repeat domain required for NF-kappa-B binding but lack the regulatory regions required for dissociation from NF-kappa-B and degradation. Therefore, prevents host NF-kappa-B release and subsequent activation. This Microplitis demolitor bracovirus (isolate Webb) (MdBV) protein is I-Kappa-B like protein N1 (N2).